The following is a 747-amino-acid chain: MAADARAEAQGLTTRILELRDAYYELDTVLVSDEEYDRMLRRLEELERLHPELQSQDSPTQTVGGRAQTTLFAPVEHAERMLSLDNVFSFEAFEAWAAKIERDAGRRVDYLCELKIDGLAINLRYENGVLVTAATRGDGVVGEDVTENIRHIPAITQRLSGAGPFPPVVEVRGEVFFPVAKFEELNANQQAAGERVFANARNAASGSLRQKAEGKNPAQRRLMRDRLGRLRMLVHGIGAWPNPPVATQSGVYELLRSWGLPTSAHGRVFGTVQEAADFIGRSAERRDTVEHEIDGVVIKVDELVLHDELGATSRAPRWAIAYKYPPEQVNTKLLDIVVSVGRTGRATPFAVMEKVKVAGSEVRQATLHNQDVVKAKGVLIGDTVVLRKAGDVIPEVLGPVVELRDGTEREFAMPTDCPECGTPLAPAKEGDIDLRCPNAEFCPAQVRGRVEHIGSRGGLDIEALGEVAAAALTQPRFPERAPLPTEAGLFGLRLEDLFPIEVVVRDSETGLPKLTETGVEKVDAPFRRRRQKKDGAFDPEAEAFDGDEIAVPSKSAIELLANLRAARTKPLWRILVSLNIRHVGPVAARALADHFGSLDAIRAASRDELAAVDGVGGIVADAVLSWFEIGWHCEIVENWARDGVQFAIPGHPGPGRADTGGGVLSGLTVVATGSLEGYTREAAQEAIVAAGGKAASSVSKKTDFVAAGPGAGSKLAKAEELGVRVLDAAQFTILVEQGPGALPEVAE.

Residues 33–37, 83–84, and Glu113 each bind NAD(+); these read DEEYD and SL. Lys115 functions as the N6-AMP-lysine intermediate in the catalytic mechanism. Positions 136, 174, 299, and 323 each coordinate NAD(+). 4 residues coordinate Zn(2+): Cys417, Cys420, Cys436, and Cys442. In terms of domain architecture, BRCT spans 659–747; sequence TGGGVLSGLT…GPGALPEVAE (89 aa).

Belongs to the NAD-dependent DNA ligase family. LigA subfamily. Mg(2+) serves as cofactor. The cofactor is Mn(2+).

It catalyses the reaction NAD(+) + (deoxyribonucleotide)n-3'-hydroxyl + 5'-phospho-(deoxyribonucleotide)m = (deoxyribonucleotide)n+m + AMP + beta-nicotinamide D-nucleotide.. DNA ligase that catalyzes the formation of phosphodiester linkages between 5'-phosphoryl and 3'-hydroxyl groups in double-stranded DNA using NAD as a coenzyme and as the energy source for the reaction. It is essential for DNA replication and repair of damaged DNA. This is DNA ligase from Leifsonia xyli subsp. xyli (strain CTCB07).